Here is a 339-residue protein sequence, read N- to C-terminus: Ribosomal RNA small subunit methyltransferase H (339 aa).

S-adenosyl-L-methionine-binding positions include 56–58, aspartate 76, phenylalanine 102, aspartate 123, and glutamine 130; that span reads GGH. 2 disordered regions span residues 274-309 and 320-339; these read RHSRGQYPEDENLPMPPQRPRYFSKPKRIAPSKAEV and LRVATRTDTPYNTDPSPQHS. Positions 325–339 are enriched in polar residues; that stretch reads RTDTPYNTDPSPQHS.

The protein belongs to the methyltransferase superfamily. RsmH family.

Its subcellular location is the cytoplasm. The catalysed reaction is cytidine(1402) in 16S rRNA + S-adenosyl-L-methionine = N(4)-methylcytidine(1402) in 16S rRNA + S-adenosyl-L-homocysteine + H(+). In terms of biological role, specifically methylates the N4 position of cytidine in position 1402 (C1402) of 16S rRNA. This is Ribosomal RNA small subunit methyltransferase H from Psychrobacter sp. (strain PRwf-1).